The sequence spans 413 residues: Tryptophan synthase beta chain 2 (413 aa).

Lys107 carries the N6-(pyridoxal phosphate)lysine modification.

It belongs to the TrpB family. As to quaternary structure, tetramer of two alpha and two beta chains. Requires pyridoxal 5'-phosphate as cofactor.

The catalysed reaction is (1S,2R)-1-C-(indol-3-yl)glycerol 3-phosphate + L-serine = D-glyceraldehyde 3-phosphate + L-tryptophan + H2O. The protein operates within amino-acid biosynthesis; L-tryptophan biosynthesis; L-tryptophan from chorismate: step 5/5. Functionally, the beta subunit is responsible for the synthesis of L-tryptophan from indole and L-serine. This Nostoc sp. (strain PCC 7120 / SAG 25.82 / UTEX 2576) protein is Tryptophan synthase beta chain 2 (trpB2).